The following is a 422-amino-acid chain: Serine--tRNA ligase (422 aa).

Thr229–Glu231 is an L-serine binding site. Arg260–Glu262 serves as a coordination point for ATP. Glu283 contacts L-serine. Residue Glu347–Ser350 participates in ATP binding. Residue Ser383 coordinates L-serine.

The protein belongs to the class-II aminoacyl-tRNA synthetase family. Type-1 seryl-tRNA synthetase subfamily. Homodimer. The tRNA molecule binds across the dimer.

Its subcellular location is the cytoplasm. The enzyme catalyses tRNA(Ser) + L-serine + ATP = L-seryl-tRNA(Ser) + AMP + diphosphate + H(+). It catalyses the reaction tRNA(Sec) + L-serine + ATP = L-seryl-tRNA(Sec) + AMP + diphosphate + H(+). Its pathway is aminoacyl-tRNA biosynthesis; selenocysteinyl-tRNA(Sec) biosynthesis; L-seryl-tRNA(Sec) from L-serine and tRNA(Sec): step 1/1. In terms of biological role, catalyzes the attachment of serine to tRNA(Ser). Is also able to aminoacylate tRNA(Sec) with serine, to form the misacylated tRNA L-seryl-tRNA(Sec), which will be further converted into selenocysteinyl-tRNA(Sec). This chain is Serine--tRNA ligase, found in Citrifermentans bemidjiense (strain ATCC BAA-1014 / DSM 16622 / JCM 12645 / Bem) (Geobacter bemidjiensis).